A 636-amino-acid chain; its full sequence is Threonine--tRNA ligase (636 aa).

Positions 1–63 constitute a TGS domain; that stretch reads MSSISIALPD…KDDSRVEIIT (63 aa). Positions 243-534 are catalytic; that stretch reads DHRRLGRELD…LIEHYAGNFP (292 aa). Positions 335, 386, and 511 each coordinate Zn(2+).

It belongs to the class-II aminoacyl-tRNA synthetase family. As to quaternary structure, homodimer. It depends on Zn(2+) as a cofactor.

It localises to the cytoplasm. The enzyme catalyses tRNA(Thr) + L-threonine + ATP = L-threonyl-tRNA(Thr) + AMP + diphosphate + H(+). In terms of biological role, catalyzes the attachment of threonine to tRNA(Thr) in a two-step reaction: L-threonine is first activated by ATP to form Thr-AMP and then transferred to the acceptor end of tRNA(Thr). Also edits incorrectly charged L-seryl-tRNA(Thr). The sequence is that of Threonine--tRNA ligase from Pelobacter propionicus (strain DSM 2379 / NBRC 103807 / OttBd1).